The sequence spans 572 residues: Acetyl-coenzyme A synthetase (572 aa).

Thr-260 is a binding site for CoA. ATP contacts are provided by residues 333 to 335 (GEP), 354 to 359 (DTWWMT), Asp-440, and Arg-455. Ser-463 is a CoA binding site. Arg-466 is an ATP binding site. Mg(2+) is bound by residues Val-477, His-479, and Ile-482. A CoA-binding site is contributed by Lys-524. Lys-549 is subject to N6-acetyllysine.

This sequence belongs to the ATP-dependent AMP-binding enzyme family. As to quaternary structure, interacts with FloT. The cofactor is Mg(2+). In terms of processing, acetylated. Deacetylation by the SIR2-homolog deacetylase activates the enzyme.

Its subcellular location is the cell membrane. It is found in the membrane raft. The enzyme catalyses acetate + ATP + CoA = acetyl-CoA + AMP + diphosphate. Catalyzes the conversion of acetate into acetyl-CoA (AcCoA), an essential intermediate at the junction of anabolic and catabolic pathways. AcsA undergoes a two-step reaction. In the first half reaction, AcsA combines acetate with ATP to form acetyl-adenylate (AcAMP) intermediate. In the second half reaction, it can then transfer the acetyl group from AcAMP to the sulfhydryl group of CoA, forming the product AcCoA. Has a role in growth and sporulation on acetate. This Bacillus subtilis (strain 168) protein is Acetyl-coenzyme A synthetase (acsA).